A 76-amino-acid chain; its full sequence is Esculentin-2MT3 (76 aa).

An N-terminal signal peptide occupies residues 1 to 22 (MFTLKKSMLLLFFLGTISLSLC). A propeptide spans 23 to 37 (EEERNADEDDGEKEV) (removed in mature form). Cysteines 70 and 76 form a disulfide.

This sequence belongs to the frog skin active peptide (FSAP) family. Esculentin subfamily. Expressed by the skin glands.

It localises to the secreted. Its function is as follows. Antimicrobial peptide. The chain is Esculentin-2MT3 from Amolops mantzorum (Sichuan torrent frog).